The primary structure comprises 186 residues: Der GTPase-activating protein YihI (186 aa).

A disordered region spans residues 42–77 (KAREDKKKRKHKGLASGSRHSAVEEKANKLQNEIKD). Residues 62 to 77 (SAVEEKANKLQNEIKD) show a composition bias toward basic and acidic residues.

It belongs to the YihI family. As to quaternary structure, interacts with Der.

Its function is as follows. A GTPase-activating protein (GAP) that modifies Der/EngA GTPase function. May play a role in ribosome biogenesis. This is Der GTPase-activating protein YihI from Haemophilus influenzae (strain ATCC 51907 / DSM 11121 / KW20 / Rd).